Reading from the N-terminus, the 719-residue chain is Polyribonucleotide nucleotidyltransferase (719 aa).

Residues aspartate 490 and aspartate 496 each coordinate Mg(2+). The region spanning 557–619 is the KH domain; sequence PKIEIIIIPK…KSIDAALTRI (63 aa). The S1 motif domain occupies 629–699; that stretch reads GEIYEGKIRS…KTGKFKLSHK (71 aa).

It belongs to the polyribonucleotide nucleotidyltransferase family. Mg(2+) is required as a cofactor.

It is found in the cytoplasm. The catalysed reaction is RNA(n+1) + phosphate = RNA(n) + a ribonucleoside 5'-diphosphate. In terms of biological role, involved in mRNA degradation. Catalyzes the phosphorolysis of single-stranded polyribonucleotides processively in the 3'- to 5'-direction. This is Polyribonucleotide nucleotidyltransferase from Azobacteroides pseudotrichonymphae genomovar. CFP2.